The sequence spans 274 residues: NADPH-dependent 7-cyano-7-deazaguanine reductase (274 aa).

Residues 1-33 (MPKKDALDHLSLGQHTDYPNEYDPKQLQPVPRS) form a disordered region. 84 to 86 (IES) is a substrate binding site. An NADPH-binding site is contributed by 86 to 87 (SK). The active-site Thioimide intermediate is C183. The active-site Proton donor is the D190. A substrate-binding site is contributed by 222-223 (HE). Residue 250-251 (RG) coordinates NADPH.

It belongs to the GTP cyclohydrolase I family. QueF type 2 subfamily. In terms of assembly, homodimer.

The protein resides in the cytoplasm. The catalysed reaction is 7-aminomethyl-7-carbaguanine + 2 NADP(+) = 7-cyano-7-deazaguanine + 2 NADPH + 3 H(+). The protein operates within tRNA modification; tRNA-queuosine biosynthesis. Catalyzes the NADPH-dependent reduction of 7-cyano-7-deazaguanine (preQ0) to 7-aminomethyl-7-deazaguanine (preQ1). This is NADPH-dependent 7-cyano-7-deazaguanine reductase from Idiomarina loihiensis (strain ATCC BAA-735 / DSM 15497 / L2-TR).